The following is an 81-amino-acid chain: Photosystem I iron-sulfur center (81 aa).

2 consecutive 4Fe-4S ferredoxin-type domains span residues 2–31 (SHTV…MIPW) and 39–68 (IASS…VRVY). Positions 11, 14, 17, 21, 48, 51, 54, and 58 each coordinate [4Fe-4S] cluster.

In terms of assembly, the eukaryotic PSI reaction center is composed of at least 11 subunits. The cofactor is [4Fe-4S] cluster.

Its subcellular location is the plastid. The protein resides in the chloroplast thylakoid membrane. It carries out the reaction reduced [plastocyanin] + hnu + oxidized [2Fe-2S]-[ferredoxin] = oxidized [plastocyanin] + reduced [2Fe-2S]-[ferredoxin]. In terms of biological role, apoprotein for the two 4Fe-4S centers FA and FB of photosystem I (PSI); essential for photochemical activity. FB is the terminal electron acceptor of PSI, donating electrons to ferredoxin. The C-terminus interacts with PsaA/B/D and helps assemble the protein into the PSI complex. Required for binding of PsaD and PsaE to PSI. PSI is a plastocyanin-ferredoxin oxidoreductase, converting photonic excitation into a charge separation, which transfers an electron from the donor P700 chlorophyll pair to the spectroscopically characterized acceptors A0, A1, FX, FA and FB in turn. The sequence is that of Photosystem I iron-sulfur center from Chaetosphaeridium globosum (Charophycean green alga).